Here is a 372-residue protein sequence, read N- to C-terminus: Anhydro-N-acetylmuramic acid kinase (372 aa).

Residue 12–19 (GTSMDALD) coordinates ATP.

It belongs to the anhydro-N-acetylmuramic acid kinase family.

The enzyme catalyses 1,6-anhydro-N-acetyl-beta-muramate + ATP + H2O = N-acetyl-D-muramate 6-phosphate + ADP + H(+). It participates in amino-sugar metabolism; 1,6-anhydro-N-acetylmuramate degradation. It functions in the pathway cell wall biogenesis; peptidoglycan recycling. Its function is as follows. Catalyzes the specific phosphorylation of 1,6-anhydro-N-acetylmuramic acid (anhMurNAc) with the simultaneous cleavage of the 1,6-anhydro ring, generating MurNAc-6-P. Is required for the utilization of anhMurNAc either imported from the medium or derived from its own cell wall murein, and thus plays a role in cell wall recycling. This Coxiella burnetii (strain CbuK_Q154) (Coxiella burnetii (strain Q154)) protein is Anhydro-N-acetylmuramic acid kinase.